A 233-amino-acid chain; its full sequence is Uridylate kinase (233 aa).

ATP-binding positions include 9 to 12 (KLSG), glycine 51, and arginine 55. UMP is bound by residues aspartate 69 and 130 to 137 (TGNPFFST). ATP-binding residues include asparagine 158, tyrosine 164, and aspartate 167.

This sequence belongs to the UMP kinase family. Homohexamer.

The protein localises to the cytoplasm. It catalyses the reaction UMP + ATP = UDP + ADP. It participates in pyrimidine metabolism; CTP biosynthesis via de novo pathway; UDP from UMP (UMPK route): step 1/1. Its activity is regulated as follows. Inhibited by UTP. Catalyzes the reversible phosphorylation of UMP to UDP. This is Uridylate kinase from Thermus thermophilus (strain ATCC BAA-163 / DSM 7039 / HB27).